Reading from the N-terminus, the 305-residue chain is Ribonucleoside-diphosphate reductase small subunit (305 aa).

E64, E94, and H97 together coordinate Fe cation. Residue Y101 is part of the active site. The helical transmembrane segment at 150-170 (ILLFLLVEGIFFISSFFSIGL) threads the bilayer. Fe cation is bound by residues E157, E191, and H194.

It belongs to the ribonucleoside diphosphate reductase small chain family. Heterotetramer composed of a homodimer of the large subunit (R1) and a homodimer of the small subunit (R2). Larger multisubunit protein complex are also active, composed of (R1)n(R2)n. Fe cation serves as cofactor.

Its subcellular location is the host membrane. The catalysed reaction is a 2'-deoxyribonucleoside 5'-diphosphate + [thioredoxin]-disulfide + H2O = a ribonucleoside 5'-diphosphate + [thioredoxin]-dithiol. Ribonucleoside-diphosphate reductase holoenzyme provides the precursors necessary for viral DNA synthesis. Allows virus growth in non-dividing cells, as well as reactivation from latency in infected hosts. Catalyzes the biosynthesis of deoxyribonucleotides from the corresponding ribonucleotides. The protein is Ribonucleoside-diphosphate reductase small subunit of Saimiri sciureus (Common squirrel monkey).